Consider the following 661-residue polypeptide: MKFTRTLVLASTFLLATVATSQAQEVKRDTKKRGEVVLKPITIISHGKDNIEATGGTVLTYKDIEKLQPANVSELFSRQSSIAVSGGGGPSKRIHILGMEQSNLAVSVDGVPQTATSWHHTGSNVIDPAFLKRVEVEAGAAAADSGFGAAAGAIRYETVNALDLLEPGKTFGARIIGSYGTNGRGFSGSTAAYGLKDGFDWLLMLHGTSGHNYKNGDGTEILGTEPAARNILGKAGYEFDGNRIDIGYERSRDKADRLIKMNMGLPGDTEYPLEVARDSVNIKYTRTDATDMWDPEVQFYYNRNDYWRNDYQNRTNGNMILKEDLYGGKLQNTFTIDYGKITAGIDFGKHDYNTDNYGHNDRRYRKFNTQQVGAFTQGRFEFDNGFSLSTGARYDYSRFADWNDEVFSDSGASVNGTLSYKFNEHIEVFAGASRTWLGYVLGDYGYVHARNNAFYTDPTFSPGRARNYKAGVNFGGADWSAGITLFDTRIAGLPNYDSQKLGNDPEEYRSRGFTLNARYIWNYTTIGATFTKAKVTAGDDPVLPNSGSFMPIGDMATLFIDQEIPDYNMKVGATLAWAGRISDEAATAANFYDQPAYTVVNAYAEWNPPAVKNMTLRVGVENLFNENYYERTSFAPSQKRGGIDPVWAPGRTFTFQTAFKF.

An N-terminal signal peptide occupies residues methionine 1 to alanine 23. A TBDR plug domain is found at lysine 48 to valine 159. Positions threonine 170 to phenylalanine 661 constitute a TBDR beta-barrel domain.

This sequence belongs to the TonB-dependent receptor family.

The protein resides in the cell outer membrane. In terms of biological role, heme transporter. The polypeptide is Heme transporter BhuA (bhuA) (Brucella suis biovar 1 (strain 1330)).